Reading from the N-terminus, the 489-residue chain is Cysteine--tRNA ligase (489 aa).

Cys-29 is a binding site for Zn(2+). Positions 31-41 match the 'HIGH' region motif; that stretch reads ITSYDYCHIGH. Zn(2+)-binding residues include Cys-209, His-234, and Glu-238. A 'KMSKS' region motif is present at residues 266-270; the sequence is KMSKS. Residue Lys-269 participates in ATP binding.

This sequence belongs to the class-I aminoacyl-tRNA synthetase family. As to quaternary structure, monomer. Zn(2+) serves as cofactor.

The protein resides in the cytoplasm. It catalyses the reaction tRNA(Cys) + L-cysteine + ATP = L-cysteinyl-tRNA(Cys) + AMP + diphosphate. The protein is Cysteine--tRNA ligase of Desulfotalea psychrophila (strain LSv54 / DSM 12343).